The sequence spans 145 residues: 3-hydroxyacyl-[acyl-carrier-protein] dehydratase FabZ (145 aa).

The active site involves histidine 48.

This sequence belongs to the thioester dehydratase family. FabZ subfamily.

The protein localises to the cytoplasm. The catalysed reaction is a (3R)-hydroxyacyl-[ACP] = a (2E)-enoyl-[ACP] + H2O. Its function is as follows. Involved in unsaturated fatty acids biosynthesis. Catalyzes the dehydration of short chain beta-hydroxyacyl-ACPs and long chain saturated and unsaturated beta-hydroxyacyl-ACPs. The polypeptide is 3-hydroxyacyl-[acyl-carrier-protein] dehydratase FabZ (Marinomonas sp. (strain MWYL1)).